Here is a 66-residue protein sequence, read N- to C-terminus: Large ribosomal subunit protein bL35 (66 aa).

The span at 1–16 shows a compositional bias: basic residues; the sequence is MPKQKTHRASAKRFKR. The tract at residues 1-21 is disordered; the sequence is MPKQKTHRASAKRFKRTGSGG.

The protein belongs to the bacterial ribosomal protein bL35 family.

This Streptococcus sanguinis (strain SK36) protein is Large ribosomal subunit protein bL35.